The following is a 119-amino-acid chain: Translation initiation factor 1A (119 aa).

Residues 1 to 24 (MSEDDVDNSVKDFESGEENEESIG) form a disordered region. One can recognise an S1-like domain in the interval 24-98 (GRVILPNKKK…EKADVVYRYT (75 aa)).

Belongs to the eIF-1A family.

In terms of biological role, seems to be required for maximal rate of protein biosynthesis. Enhances ribosome dissociation into subunits and stabilizes the binding of the initiator Met-tRNA(I) to 40 S ribosomal subunits. The polypeptide is Translation initiation factor 1A (eIF1A) (Thermoplasma acidophilum (strain ATCC 25905 / DSM 1728 / JCM 9062 / NBRC 15155 / AMRC-C165)).